The following is a 43-amino-acid chain: METATLIAISISGLIVSFTGYALYTAFGQPSQQLRDPFEEHGD.

The helical transmembrane segment at 5–27 (TLIAISISGLIVSFTGYALYTAF) threads the bilayer.

Belongs to the PsbN family.

It localises to the plastid. The protein localises to the chloroplast thylakoid membrane. In terms of biological role, may play a role in photosystem I and II biogenesis. The polypeptide is Protein PsbN (Cicer arietinum (Chickpea)).